A 162-amino-acid polypeptide reads, in one-letter code: UPF0114 protein PFLU_5318 (162 aa).

The next 3 membrane-spanning stretches (helical) occupy residues 15-35, 53-73, and 136-156; these read LLAPIYFGLSLGLLALALKFF, LILVLLSLIDMALVGGLLVMV, and LMWYVIIHMTFVVSAFAMGYL.

This sequence belongs to the UPF0114 family.

It localises to the cell membrane. The chain is UPF0114 protein PFLU_5318 from Pseudomonas fluorescens (strain SBW25).